We begin with the raw amino-acid sequence, 210 residues long: Urease accessory protein UreF (210 aa).

It belongs to the UreF family. UreD, UreF and UreG form a complex that acts as a GTP-hydrolysis-dependent molecular chaperone, activating the urease apoprotein by helping to assemble the nickel containing metallocenter of UreC. The UreE protein probably delivers the nickel.

The protein resides in the cytoplasm. Functionally, required for maturation of urease via the functional incorporation of the urease nickel metallocenter. This is Urease accessory protein UreF from Cereibacter sphaeroides (strain ATCC 17025 / ATH 2.4.3) (Rhodobacter sphaeroides).